The chain runs to 152 residues: Deoxyuridine 5'-triphosphate nucleotidohydrolase (152 aa).

Substrate-binding positions include 71–73, Asn-84, 88–90, and Met-98; these read RSG and LID.

This sequence belongs to the dUTPase family. Requires Mg(2+) as cofactor.

The catalysed reaction is dUTP + H2O = dUMP + diphosphate + H(+). It participates in pyrimidine metabolism; dUMP biosynthesis; dUMP from dCTP (dUTP route): step 2/2. This enzyme is involved in nucleotide metabolism: it produces dUMP, the immediate precursor of thymidine nucleotides and it decreases the intracellular concentration of dUTP so that uracil cannot be incorporated into DNA. The protein is Deoxyuridine 5'-triphosphate nucleotidohydrolase of Photorhabdus laumondii subsp. laumondii (strain DSM 15139 / CIP 105565 / TT01) (Photorhabdus luminescens subsp. laumondii).